We begin with the raw amino-acid sequence, 356 residues long: Activating signal cointegrator 1 complex subunit 1 (356 aa).

The required for interaction with ASCC3 stretch occupies residues 1 to 52 (MDVLRPQIVTFDGRNYRKNPIQEKQYQHEEDEDFYPDSMEYSDEPCGAYEVA). One can recognise a KH domain in the interval 57 to 119 (GFRATVSAPS…NGVVSARTRI (63 aa)).

In terms of assembly, identified in the ASCC complex that contains ASCC1, ASCC2 and ASCC3. Interacts directly with ASCC3. The ASCC complex interacts with ALKBH3. Part of the ASC-1 complex, that contains TRIP4, ASCC1, ASCC2 and ASCC3. Interacts with CSRP1. Interacts with ZCCHC4. As to expression, expressed in the spinal cord, brain, paraspinal ganglia, thyroid, and submandibular glands.

It is found in the nucleus. The protein localises to the nucleus speckle. Functionally, plays a role in DNA damage repair as component of the ASCC complex. Part of the ASC-1 complex that enhances NF-kappa-B, SRF and AP1 transactivation. In cells responding to gastrin-activated paracrine signals, it is involved in the induction of SERPINB2 expression by gastrin. May also play a role in the development of neuromuscular junction. In Mus musculus (Mouse), this protein is Activating signal cointegrator 1 complex subunit 1 (Ascc1).